Consider the following 318-residue polypeptide: MIDLSPLARHLVGTPLAVWAQGLQAQLDSKMEKGHGDLDRWQSALDALPNIQPSEVDLLNDLALDTDCDDATRAQMRTALMGLCPWRKGPFHLFGVHVDTEWRSDWKWSRVAPHLDLKGKRILDVGCGNGYYMWRMLGAGADSVIGVDPNWLFFCQFQAVQRYLSEPKAWHLPFPFEDLPANLEGFDTVFSMGVFYHRRSPIEHLLALKDTLVKGGELVLETLVVEGDQQQVLVPEDRYAQMRNVWFLPSVPALMLWLRRAGFSDVRCVDVSVTTVEEQRGTEWMKYQSLSDFLDPEDHSKTLEGLPAPMRAVIIAKK.

Carboxy-S-adenosyl-L-methionine is bound by residues Lys-88, Trp-102, Lys-107, Gly-126, Met-192, Tyr-196, and Arg-311.

The protein belongs to the class I-like SAM-binding methyltransferase superfamily. CmoB family. Homotetramer.

It carries out the reaction carboxy-S-adenosyl-L-methionine + 5-hydroxyuridine(34) in tRNA = 5-carboxymethoxyuridine(34) in tRNA + S-adenosyl-L-homocysteine + H(+). Catalyzes carboxymethyl transfer from carboxy-S-adenosyl-L-methionine (Cx-SAM) to 5-hydroxyuridine (ho5U) to form 5-carboxymethoxyuridine (cmo5U) at position 34 in tRNAs. The sequence is that of tRNA U34 carboxymethyltransferase from Pseudomonas fluorescens (strain SBW25).